Reading from the N-terminus, the 288-residue chain is Diaminopimelate epimerase (288 aa).

Substrate-binding residues include asparagine 14 and asparagine 67. The Proton donor role is filled by cysteine 76. Substrate is bound by residues glycine 77–asparagine 78, asparagine 166, asparagine 199, and glutamate 217–arginine 218. The Proton acceptor role is filled by cysteine 226. Residue glycine 227–threonine 228 participates in substrate binding.

It belongs to the diaminopimelate epimerase family. In terms of assembly, homodimer.

The protein localises to the cytoplasm. The enzyme catalyses (2S,6S)-2,6-diaminopimelate = meso-2,6-diaminopimelate. It functions in the pathway amino-acid biosynthesis; L-lysine biosynthesis via DAP pathway; DL-2,6-diaminopimelate from LL-2,6-diaminopimelate: step 1/1. Functionally, catalyzes the stereoinversion of LL-2,6-diaminopimelate (L,L-DAP) to meso-diaminopimelate (meso-DAP), a precursor of L-lysine and an essential component of the bacterial peptidoglycan. The polypeptide is Diaminopimelate epimerase (Bacillus cereus (strain AH820)).